The primary structure comprises 165 residues: Transcription antitermination protein NusB (165 aa).

A disordered region spans residues 1–20 (MSDVENGGEPRQPSVKPANQ).

The protein belongs to the NusB family.

Its function is as follows. Involved in transcription antitermination. Required for transcription of ribosomal RNA (rRNA) genes. Binds specifically to the boxA antiterminator sequence of the ribosomal RNA (rrn) operons. The protein is Transcription antitermination protein NusB of Agrobacterium fabrum (strain C58 / ATCC 33970) (Agrobacterium tumefaciens (strain C58)).